Here is a 354-residue protein sequence, read N- to C-terminus: Putative ankyrin repeat protein L284 (354 aa).

3 ANK repeats span residues 201 to 230, 253 to 284, and 286 to 314; these read ILDDILTLIIKSGNVSAFKTLINIIGLSND, SRYPQLYLESSIINGRTDIVDNLVKKGSNPIV, and LHKAAECAQFDIIWNLSENSLINQNDIDI.

This chain is Putative ankyrin repeat protein L284, found in Acanthamoeba polyphaga (Amoeba).